Here is a 200-residue protein sequence, read N- to C-terminus: Large ribosomal subunit protein bL25 (200 aa).

This sequence belongs to the bacterial ribosomal protein bL25 family. CTC subfamily. In terms of assembly, part of the 50S ribosomal subunit; part of the 5S rRNA/L5/L18/L25 subcomplex. Contacts the 5S rRNA. Binds to the 5S rRNA independently of L5 and L18.

This is one of the proteins that binds to the 5S RNA in the ribosome where it forms part of the central protuberance. This chain is Large ribosomal subunit protein bL25, found in Caldicellulosiruptor bescii (strain ATCC BAA-1888 / DSM 6725 / KCTC 15123 / Z-1320) (Anaerocellum thermophilum).